The following is a 537-amino-acid chain: 2-isopropylmalate synthase (537 aa).

The region spanning 8–269 is the Pyruvate carboxyltransferase domain; it reads VLIFDTTLRD…YFNGYLGRAE (262 aa). Mn(2+) contacts are provided by D17, H208, H210, and N244. The tract at residues 408–537 is regulatory domain; that stretch reads QLAGVQVSCG…QRAPLPAPAL (130 aa).

The protein belongs to the alpha-IPM synthase/homocitrate synthase family. LeuA type 1 subfamily. As to quaternary structure, homodimer. Mn(2+) is required as a cofactor.

It localises to the cytoplasm. It carries out the reaction 3-methyl-2-oxobutanoate + acetyl-CoA + H2O = (2S)-2-isopropylmalate + CoA + H(+). Its pathway is amino-acid biosynthesis; L-leucine biosynthesis; L-leucine from 3-methyl-2-oxobutanoate: step 1/4. In terms of biological role, catalyzes the condensation of the acetyl group of acetyl-CoA with 3-methyl-2-oxobutanoate (2-ketoisovalerate) to form 3-carboxy-3-hydroxy-4-methylpentanoate (2-isopropylmalate). The polypeptide is 2-isopropylmalate synthase (Synechococcus sp. (strain RCC307)).